The sequence spans 266 residues: 3-methyl-2-oxobutanoate hydroxymethyltransferase (266 aa).

Residues aspartate 43 and aspartate 82 each contribute to the Mg(2+) site. Residues 43-44, aspartate 82, and lysine 110 contribute to the 3-methyl-2-oxobutanoate site; that span reads DS. Glutamate 112 lines the Mg(2+) pocket. Glutamate 179 acts as the Proton acceptor in catalysis.

It belongs to the PanB family. In terms of assembly, homodecamer; pentamer of dimers. Requires Mg(2+) as cofactor.

The protein resides in the cytoplasm. It carries out the reaction 3-methyl-2-oxobutanoate + (6R)-5,10-methylene-5,6,7,8-tetrahydrofolate + H2O = 2-dehydropantoate + (6S)-5,6,7,8-tetrahydrofolate. It participates in cofactor biosynthesis; (R)-pantothenate biosynthesis; (R)-pantoate from 3-methyl-2-oxobutanoate: step 1/2. Its function is as follows. Catalyzes the reversible reaction in which hydroxymethyl group from 5,10-methylenetetrahydrofolate is transferred onto alpha-ketoisovalerate to form ketopantoate. This chain is 3-methyl-2-oxobutanoate hydroxymethyltransferase, found in Psychrobacter cryohalolentis (strain ATCC BAA-1226 / DSM 17306 / VKM B-2378 / K5).